The chain runs to 270 residues: uncharacterized protein (270 aa).

Disordered regions lie at residues 1 to 21 (MSTN…YEKP) and 53 to 77 (PNIL…AKLN). Residues 58–75 (SKHDGDKNKNDKKKEDAK) are compositionally biased toward basic and acidic residues. A coiled-coil region spans residues 182–270 (EENKSREEKH…KIEDNLNTYE (89 aa)).

This is an uncharacterized protein from Plasmodium falciparum (isolate 3D7).